A 342-amino-acid chain; its full sequence is N-acetyl-gamma-glutamyl-phosphate reductase (342 aa).

The active site involves Cys-149.

This sequence belongs to the NAGSA dehydrogenase family. Type 1 subfamily.

The protein localises to the cytoplasm. It catalyses the reaction N-acetyl-L-glutamate 5-semialdehyde + phosphate + NADP(+) = N-acetyl-L-glutamyl 5-phosphate + NADPH + H(+). It functions in the pathway amino-acid biosynthesis; L-arginine biosynthesis; N(2)-acetyl-L-ornithine from L-glutamate: step 3/4. Catalyzes the NADPH-dependent reduction of N-acetyl-5-glutamyl phosphate to yield N-acetyl-L-glutamate 5-semialdehyde. In Paracoccus denitrificans (strain Pd 1222), this protein is N-acetyl-gamma-glutamyl-phosphate reductase.